The sequence spans 339 residues: N-acetyl-gamma-glutamyl-phosphate reductase (339 aa).

Residue Cys144 is part of the active site.

This sequence belongs to the NAGSA dehydrogenase family. Type 1 subfamily.

Its subcellular location is the cytoplasm. The enzyme catalyses N-acetyl-L-glutamate 5-semialdehyde + phosphate + NADP(+) = N-acetyl-L-glutamyl 5-phosphate + NADPH + H(+). Its pathway is amino-acid biosynthesis; L-arginine biosynthesis; N(2)-acetyl-L-ornithine from L-glutamate: step 3/4. Functionally, catalyzes the NADPH-dependent reduction of N-acetyl-5-glutamyl phosphate to yield N-acetyl-L-glutamate 5-semialdehyde. The polypeptide is N-acetyl-gamma-glutamyl-phosphate reductase (Methanobrevibacter smithii (strain ATCC 35061 / DSM 861 / OCM 144 / PS)).